Here is a 363-residue protein sequence, read N- to C-terminus: Methylthioribose-1-phosphate isomerase (363 aa).

The active-site Proton donor is D253.

This sequence belongs to the eIF-2B alpha/beta/delta subunits family. MtnA subfamily.

The protein localises to the cytoplasm. Its subcellular location is the nucleus. The catalysed reaction is 5-(methylsulfanyl)-alpha-D-ribose 1-phosphate = 5-(methylsulfanyl)-D-ribulose 1-phosphate. It participates in amino-acid biosynthesis; L-methionine biosynthesis via salvage pathway; L-methionine from S-methyl-5-thio-alpha-D-ribose 1-phosphate: step 1/6. Its function is as follows. Catalyzes the interconversion of methylthioribose-1-phosphate (MTR-1-P) into methylthioribulose-1-phosphate (MTRu-1-P). The polypeptide is Methylthioribose-1-phosphate isomerase (Drosophila grimshawi (Hawaiian fruit fly)).